The following is a 143-amino-acid chain: MNKTIIREGKINLGKWFIIDATDKNLGRLASETAKTLVGKYDPLYAPNVNPKNIIVIINADKIRVTGNKKFDKFYYRHSGQVGGLTIETFNELQSRLPGRILEKAVKGILPKGPLGRELFNNLKVYAGSSHPHEAQNPVALVM.

This sequence belongs to the universal ribosomal protein uL13 family. In terms of assembly, part of the 50S ribosomal subunit.

It is found in the plastid. Its subcellular location is the chloroplast. The sequence is that of Large ribosomal subunit protein uL13c from Guillardia theta (Cryptophyte).